Consider the following 959-residue polypeptide: AP2-associated protein kinase 1 (959 aa).

An N-acetylmethionine modification is found at Met1. Residues 1–11 show a composition bias toward basic and acidic residues; that stretch reads MKKFFDSRREQ. Positions 1-27 are disordered; that stretch reads MKKFFDSRREQGSSGLGSGSSGGGGSS. Ser14 carries the post-translational modification Phosphoserine. Over residues 14–27 the composition is skewed to gly residues; that stretch reads SGLGSGSSGGGGSS. In terms of domain architecture, Protein kinase spans 46–315; sequence VTVDEVLAEG…QVSYFSFKLL (270 aa). ATP is bound by residues 52–60 and Lys74; that span reads LAEGGFALV. Asp176 acts as the Proton acceptor in catalysis. Tyr234 bears the Phosphotyrosine mark. A Phosphoserine modification is found at Ser235. The interval 340-385 is disordered; it reads SEAAVKKTQPKARLTDPIPTTETSIAPRQRPKAGQTQPNPGILPIQ. 2 positions are modified to phosphothreonine: Thr354 and Thr389. The residue at position 391 (Arg391) is an Omega-N-methylarginine. Disordered stretches follow at residues 398–514 and 578–630; these read PLPQ…AVHP and TAPQ…RAGH. Residues 404-419 show a composition bias toward polar residues; the sequence is GPSNQPGLLPSVSQPK. Low complexity predominate over residues 420 to 435; sequence AQATPSQPLQSSQPKQ. Thr441 is subject to Phosphothreonine. Low complexity-rich tracts occupy residues 444–481, 494–510, and 578–603; these read QTPATQTQGLPTQAQATPQHQQQHLLKQQQQQQQQPQQ, QQQQQQQQQQAQTQQFQ, and TAPQAAAAQEPGQIQAPVRQQPKVQT. Thr604 carries the phosphothreonine modification. A compositionally biased stretch (polar residues) spans 609 to 625; it reads IQGQKVGSLTPPSSPKT. Residue Ser616 is modified to Phosphoserine. At Thr618 the chain carries Phosphothreonine. Residues Ser621, Ser622, Ser635, and Ser648 each carry the phosphoserine modification. Thr651 carries the post-translational modification Phosphothreonine. 4 disordered regions span residues 662-699, 727-763, 837-857, and 923-943; these read SLNKSKSATTTPSGSPRTSQQNVSNASEGSTWNPFDDD, GGSAESLIPGFQPTQGDAFTTPSFSAGTAEKRKGGQA, PVAQRLPSQTESVTSNRTDSL, and ITKNTQGGHSRNSSGSSESSL. The segment covering 670–694 has biased composition (polar residues); the sequence is TTTPSGSPRTSQQNVSNASEGSTWN. At Ser729 the chain carries Phosphoserine. Polar residues-rich tracts occupy residues 738–752 and 842–857; these read QPTQGDAFTTPSFSA and LPSQTESVTSNRTDSL. The tract at residues 821-958 is clathrin-binding domain (CBD); that stretch reads DKADVAVESL…SLLLVDQLID (138 aa). Residues Ser844, Ser935, and Ser936 each carry the phosphoserine modification. The span at 929–942 shows a compositional bias: low complexity; it reads GGHSRNSSGSSESS.

Belongs to the protein kinase superfamily. Ser/Thr protein kinase family. Interacts (via CBD domain) with clathrin. Interacts with AP-2 complex. Interacts with NUMB. Interacts with alpha-adaptin. Interacts with EPS15 isoform 2. Interacts with membrane-bound activated NOTCH1 but not with the inactive full-length form of NOTCH1. Preferentially interacts with monoubiquitinated activated NOTCH1 compared to the non-ubiquitinated form. Autophosphorylated.

It is found in the cell membrane. The protein localises to the membrane. Its subcellular location is the clathrin-coated pit. The protein resides in the presynapse. The catalysed reaction is L-seryl-[protein] + ATP = O-phospho-L-seryl-[protein] + ADP + H(+). The enzyme catalyses L-threonyl-[protein] + ATP = O-phospho-L-threonyl-[protein] + ADP + H(+). Stimulated by clathrin. Functionally, regulates clathrin-mediated endocytosis by phosphorylating the AP2M1/mu2 subunit of the adaptor protein complex 2 (AP-2) which ensures high affinity binding of AP-2 to cargo membrane proteins during the initial stages of endocytosis. Preferentially, may phosphorylate substrates on threonine residues. Regulates phosphorylation of other AP-2 subunits as well as AP-2 localization and AP-2-mediated internalization of ligand complexes. Phosphorylates NUMB and regulates its cellular localization, promoting NUMB localization to endosomes. Binds to and stabilizes the activated form of NOTCH1, increases its localization in endosomes and regulates its transcriptional activity. The sequence is that of AP2-associated protein kinase 1 (Aak1) from Mus musculus (Mouse).